Here is a 355-residue protein sequence, read N- to C-terminus: Guanine nucleotide-binding protein G(q) subunit alpha (355 aa).

Cysteine 3 is lipidated: S-palmitoyl cysteine. The G-alpha domain occupies 32–355 (KEIKLLLLGT…QHITEVVPGL (324 aa)). Residues 35–48 (KLLLLGTGESGKST) form a G1 motif region. GTP contacts are provided by residues 40-47 (GTGESGKS), 174-180 (LRVRVPT), 199-203 (DVGGQ), 269-272 (NKKD), and alanine 326. Residues serine 47 and threonine 180 each contribute to the Mg(2+) site. The tract at residues 172-180 (DVLRVRVPT) is G2 motif. Positions 195 to 204 (FKMVDVGGQR) are G3 motif. A G4 motif region spans residues 265 to 272 (ILFLNKKD). The G5 motif stretch occupies residues 324-329 (TCATDT).

This sequence belongs to the G-alpha family. G(q) subfamily. In terms of assembly, g proteins are composed of 3 units; alpha, beta and gamma. The alpha chain contains the guanine nucleotide binding site.

In terms of biological role, guanine nucleotide-binding proteins (G proteins) are involved as modulators or transducers in various transmembrane signaling systems. The chain is Guanine nucleotide-binding protein G(q) subunit alpha from Geodia cydonium (Sponge).